The chain runs to 444 residues: Argininosuccinate synthase (444 aa).

ATP contacts are provided by residues 18–26 (AFSGGLDTS) and alanine 44. Position 100 (tyrosine 100) interacts with L-citrulline. The ATP site is built by glycine 130 and threonine 132. The L-aspartate site is built by threonine 132, asparagine 136, and aspartate 137. Asparagine 136 contacts L-citrulline. ATP is bound at residue aspartate 137. The L-citrulline site is built by arginine 140 and serine 193. Aspartate 195 provides a ligand contact to ATP. Residues threonine 202, glutamate 204, and glutamate 281 each coordinate L-citrulline.

This sequence belongs to the argininosuccinate synthase family. Type 2 subfamily. Homotetramer.

The protein resides in the cytoplasm. The catalysed reaction is L-citrulline + L-aspartate + ATP = 2-(N(omega)-L-arginino)succinate + AMP + diphosphate + H(+). It functions in the pathway amino-acid biosynthesis; L-arginine biosynthesis; L-arginine from L-ornithine and carbamoyl phosphate: step 2/3. The protein is Argininosuccinate synthase of Haemophilus influenzae (strain PittGG).